The primary structure comprises 278 residues: uncharacterized protein (278 aa).

This is an uncharacterized protein from Escherichia coli (strain K12).